A 1108-amino-acid chain; its full sequence is Transmembrane protein 132C (1108 aa).

Positions 1–27 (MRSEGAAPGPAAPLCGALSLLLGALLG) are cleaved as a signal peptide. At 28-922 (KVIEGHGVTD…LVQTPRGLSD (895 aa)) the chain is on the extracellular side. 2 N-linked (GlcNAc...) asparagine glycosylation sites follow: N316 and N373. Over residues 820-836 (HASDRRQKGQHHERTGQ) the composition is skewed to basic and acidic residues. The interval 820 to 857 (HASDRRQKGQHHERTGQDGHLYGSSPVEREEGALRRAT) is disordered. The chain crosses the membrane as a helical span at residues 923 to 943 (LEIGMYALLGVFCLAILVFLI). Residues 944–1108 (NCATFALKYR…NYLEKLKDKA (165 aa)) lie on the Cytoplasmic side of the membrane. The tract at residues 1022-1072 (QSQIHRSADSGGRQGREQKQDPLHSPTSKRKKVKFTTFTTIPPDDSCPTVN) is disordered.

The protein belongs to the TMEM132 family.

Its subcellular location is the membrane. This is Transmembrane protein 132C (TMEM132C) from Homo sapiens (Human).